The following is a 139-amino-acid chain: MALSPKRVKYRKVQRGRVKGDATRCNAVDFGAYALVCLEPFWLTSRQIEAARVALNRRIKRGGKLWIRVFPDKPYSKKPAETRMGKGKGSPEYWVAVVKPGTVLFELMGVERALAEQAMLLAGSKLPIKTRFAERVQEI.

The protein belongs to the universal ribosomal protein uL16 family. In terms of assembly, part of the 50S ribosomal subunit.

Its function is as follows. Binds 23S rRNA and is also seen to make contacts with the A and possibly P site tRNAs. This Treponema pallidum (strain Nichols) protein is Large ribosomal subunit protein uL16.